The sequence spans 205 residues: MPLTEIIAGAALGLALQILHEAIQRAKDRSLTTSCILDRLDSTILRITPLMAKVEKLNKESDESLRKVFEDLKHLLEKAVVLVEAYAELKRRNLLGKYRYKRRIKELEGSLKWMVDVDVKVNQWADIKDLMAKMSEMNTKLEKIMGQPIDCIISEDNTNMDIVERVDPSLEAKAGCSNSDSKPKIDIHLRWSKQSKDHGIRFVLN.

The RPW8 domain occupies 1 to 153 (MPLTEIIAGA…IMGQPIDCII (153 aa)). The helical transmembrane segment at 7 to 23 (IAGAALGLALQILHEAI) threads the bilayer. Coiled-coil stretches lie at residues 70–92 (EDLKHLLEKAVVLVEAYAELKRR) and 125–147 (ADIKDLMAKMSEMNTKLEKIMGQ).

Belongs to the plant RPW8 protein family.

It is found in the membrane. Functionally, probable disease resistance (R) protein. The chain is RPW8-like protein 2 from Arabidopsis thaliana (Mouse-ear cress).